The sequence spans 719 residues: Putative ankyrin repeat protein RBE_0319 (719 aa).

9 ANK repeats span residues 377–406 (VAEELLFTATYYQNINIIKQIIETKIEISS), 408–438 (TLIKALYINFTSDNKEILDYLLSFKGLNINE), 442–472 (NGGTLLDYAITFNKLDIVKKLLSHENIEVNK), 476–506 (YGFTILEQAINDDKLEIVKLLLSCKSLEINQ), 510–540 (YQTTPLQQAINGDKLEIVKLLLSHPDIKFNE), 544–572 (LGYTSLDWVIICNKLEIFKVLMPHLDINQ), 576–605 (DGYTPLEWSIYNSYEVFQTLLLRPDINVNE), 609–639 (HGLTPLQLAIIDHNDQMIQALLSHKNIEVSE), and 642–672 (QYGTPLELVINNSNDTALKLLLSHPKINLNK).

The chain is Putative ankyrin repeat protein RBE_0319 from Rickettsia bellii (strain RML369-C).